The following is a 241-amino-acid chain: Phycocyanobilin:ferredoxin oxidoreductase (241 aa).

This sequence belongs to the HY2 family.

It carries out the reaction (2R,3Z)-phycocyanobilin + 4 oxidized [2Fe-2S]-[ferredoxin] = biliverdin IXalpha + 4 reduced [2Fe-2S]-[ferredoxin] + 4 H(+). Functionally, catalyzes the four-electron reduction of biliverdin IX-alpha (2-electron reduction at both the A and D rings); the reaction proceeds via an isolatable 2-electron intermediate, 181,182-dihydrobiliverdin. This is Phycocyanobilin:ferredoxin oxidoreductase from Prochlorococcus marinus (strain MIT 9301).